A 296-amino-acid chain; its full sequence is Adrenocorticotropic hormone receptor (296 aa).

Residues 1 to 23 (MKHIINSYEHTNDTARNNSDCPD) are Extracellular-facing. Residues asparagine 12 and asparagine 17 are each glycosylated (N-linked (GlcNAc...) asparagine). Disulfide bonds link cysteine 21–cysteine 253 and cysteine 245–cysteine 251. Residues 24–49 (VVLPEEIFFTISVIGILENLIVLLAV) form a helical membrane-spanning segment. Residues 50 to 58 (IKNKNLQSP) are Cytoplasmic-facing. Residues 59–79 (MYFFICSLAISDMLGSLYKIL) traverse the membrane as a helical segment. Residues 80-104 (ENILIMFRNMGYLKPRGSFESTADD) are Extracellular-facing. The helical transmembrane segment at 105–126 (IIDCMFILSLLGSIFSLSVIAA) threads the bilayer. Topologically, residues 127 to 147 (DRYITIFHALQYHSIVTMRRT) are cytoplasmic. Residues 148 to 168 (IITLTIIWMFCTGSGITMVIF) traverse the membrane as a helical segment. The Extracellular portion of the chain corresponds to 169–180 (SHHIPTVLTFTS). Residues 181-199 (LFPLMLVFILCLYIHMFLL) form a helical membrane-spanning segment. Over 200 to 217 (ARSHARKISTLPRTNMKG) the chain is Cytoplasmic. The helical transmembrane segment at 218–244 (AMTLTILLGVFIFCWAPFVLHVLLMTF) threads the bilayer. At 245 to 256 (CPNNPYCVCYMS) the chain is on the extracellular side. A helical transmembrane segment spans residues 257–278 (LFQVNGMLIMCNAVIDPFIYAF). Over 279 to 296 (RSPELRDAFKRMLFCNRY) the chain is Cytoplasmic. Cysteine 293 carries S-palmitoyl cysteine lipidation.

This sequence belongs to the G-protein coupled receptor 1 family. As to quaternary structure, homodimer. Interacts with corticotropin (ACTH). Interacts with MRAP; this interaction targets MC2R to the plasma membrane. Interacts with MRAP2; competing with MRAP for binding to MC2R and impairing the binding of corticotropin (ACTH). Ubiquitinated by MGRN1 that may be involved in post-endocytic trafficking and/or degradation of internalized receptor.

It is found in the cell membrane. In terms of biological role, hormone receptor primarily expressed in adrenal cortex that plays a key role in regulating adrenocortical function. Upon corticotropin (ACTH) binding, facilitates the release of adrenal glucocorticoids, including cortisol and corticosterone. In addition, MC2R is required for fetal and neonatal adrenal gland development. Mechanistically, activates adenylate cyclase (cAMP), the MAPK cascade as well as the cAMP-dependent protein kinase A pathway leading to steroidogenic factor 1/NR5A1-mediated transcriptional activation. The sequence is that of Adrenocorticotropic hormone receptor (Mc2r) from Mus musculus (Mouse).